A 20-amino-acid chain; its full sequence is Putative antimicrobial protein 2 (20 aa).

Residues 1-20 (DLPECCSATELELDSGKQTS) form a disordered region.

May have antimicrobial activity. This chain is Putative antimicrobial protein 2, found in Cenchritis muricatus (Beaded periwinkle).